A 252-amino-acid polypeptide reads, in one-letter code: 5'-nucleotidase SurE (252 aa).

4 residues coordinate a divalent metal cation: D8, D9, S39, and N91.

It belongs to the SurE nucleotidase family. A divalent metal cation serves as cofactor.

It is found in the cytoplasm. The catalysed reaction is a ribonucleoside 5'-phosphate + H2O = a ribonucleoside + phosphate. In terms of biological role, nucleotidase that shows phosphatase activity on nucleoside 5'-monophosphates. The chain is 5'-nucleotidase SurE from Legionella pneumophila (strain Lens).